A 230-amino-acid polypeptide reads, in one-letter code: Lipoprotein-releasing system ATP-binding protein LolD (230 aa).

The 219-residue stretch at L10–L228 folds into the ABC transporter domain. G46–S53 serves as a coordination point for ATP.

This sequence belongs to the ABC transporter superfamily. Lipoprotein translocase (TC 3.A.1.125) family. As to quaternary structure, the complex is composed of two ATP-binding proteins (LolD) and two transmembrane proteins (LolC and LolE).

The protein localises to the cell inner membrane. Functionally, part of the ABC transporter complex LolCDE involved in the translocation of mature outer membrane-directed lipoproteins, from the inner membrane to the periplasmic chaperone, LolA. Responsible for the formation of the LolA-lipoprotein complex in an ATP-dependent manner. This Bordetella avium (strain 197N) protein is Lipoprotein-releasing system ATP-binding protein LolD.